Here is a 467-residue protein sequence, read N- to C-terminus: A-type ATP synthase subunit B (467 aa).

A disordered region spans residues 95-114 (GKGQPRDHMPLPPPEDFRDV).

The protein belongs to the ATPase alpha/beta chains family. Has multiple subunits with at least A(3), B(3), C, D, E, F, H, I and proteolipid K(x).

It localises to the cell membrane. Component of the A-type ATP synthase that produces ATP from ADP in the presence of a proton gradient across the membrane. The B chain is a regulatory subunit. The chain is A-type ATP synthase subunit B from Pyrobaculum aerophilum (strain ATCC 51768 / DSM 7523 / JCM 9630 / CIP 104966 / NBRC 100827 / IM2).